The primary structure comprises 325 residues: Glutarate 2-hydroxylase (325 aa).

The Fe cation site is built by His-160, Asp-162, and His-292.

The protein belongs to the glutarate hydroxylase family. In terms of assembly, homotetramer. The cofactor is Fe(2+).

It carries out the reaction glutarate + 2-oxoglutarate + O2 = (S)-2-hydroxyglutarate + succinate + CO2. It functions in the pathway amino-acid degradation. Its function is as follows. Acts as an alpha-ketoglutarate-dependent dioxygenase catalyzing hydroxylation of glutarate (GA) to L-2-hydroxyglutarate (L2HG). Functions in a L-lysine degradation pathway that proceeds via cadaverine, glutarate and L-2-hydroxyglutarate. The chain is Glutarate 2-hydroxylase from Escherichia coli O127:H6 (strain E2348/69 / EPEC).